Reading from the N-terminus, the 401-residue chain is 3-sulfinopropanoyl-CoA desulfinase (401 aa).

FAD contacts are provided by residues 121–124 (ICIS), Ser-130, and 153–156 (YWIT). 243–244 (YN) contributes to the substrate binding site. Residues Arg-272, Gln-339, Ser-343, 366–370 (GGTAQ), and Gln-387 contribute to the FAD site.

The protein belongs to the acyl-CoA dehydrogenase family. Homotetramer. FAD is required as a cofactor.

It catalyses the reaction 3-sulfinopropanoyl-CoA + H2O = propanoyl-CoA + sulfite + H(+). In terms of biological role, catalyzes the conversion 3-sulfinopropanoyl-CoA (3SP-CoA) to propanoyl-CoA by abstraction of sulfite. Does not show dehydrogenase activity. Involved in the degradation of 3,3'-dithiodipropionate (DTDP), a sulfur-containing precursor substrate for biosynthesis of polythioesters (PTEs). The polypeptide is 3-sulfinopropanoyl-CoA desulfinase (Advenella mimigardefordensis (strain DSM 17166 / LMG 22922 / DPN7)).